A 473-amino-acid chain; its full sequence is ATP synthase subunit beta (473 aa).

158–165 contacts ATP; that stretch reads GGAGVGKT.

The protein belongs to the ATPase alpha/beta chains family. As to quaternary structure, F-type ATPases have 2 components, CF(1) - the catalytic core - and CF(0) - the membrane proton channel. CF(1) has five subunits: alpha(3), beta(3), gamma(1), delta(1), epsilon(1). CF(0) has three main subunits: a(1), b(2) and c(9-12). The alpha and beta chains form an alternating ring which encloses part of the gamma chain. CF(1) is attached to CF(0) by a central stalk formed by the gamma and epsilon chains, while a peripheral stalk is formed by the delta and b chains.

The protein resides in the cell membrane. It catalyses the reaction ATP + H2O + 4 H(+)(in) = ADP + phosphate + 5 H(+)(out). Its function is as follows. Produces ATP from ADP in the presence of a proton gradient across the membrane. The catalytic sites are hosted primarily by the beta subunits. This chain is ATP synthase subunit beta, found in Anoxybacillus flavithermus (strain DSM 21510 / WK1).